The primary structure comprises 95 residues: Aspartyl/glutamyl-tRNA(Asn/Gln) amidotransferase subunit C (95 aa).

This sequence belongs to the GatC family. As to quaternary structure, heterotrimer of A, B and C subunits.

It catalyses the reaction L-glutamyl-tRNA(Gln) + L-glutamine + ATP + H2O = L-glutaminyl-tRNA(Gln) + L-glutamate + ADP + phosphate + H(+). The enzyme catalyses L-aspartyl-tRNA(Asn) + L-glutamine + ATP + H2O = L-asparaginyl-tRNA(Asn) + L-glutamate + ADP + phosphate + 2 H(+). Functionally, allows the formation of correctly charged Asn-tRNA(Asn) or Gln-tRNA(Gln) through the transamidation of misacylated Asp-tRNA(Asn) or Glu-tRNA(Gln) in organisms which lack either or both of asparaginyl-tRNA or glutaminyl-tRNA synthetases. The reaction takes place in the presence of glutamine and ATP through an activated phospho-Asp-tRNA(Asn) or phospho-Glu-tRNA(Gln). In Chelativorans sp. (strain BNC1), this protein is Aspartyl/glutamyl-tRNA(Asn/Gln) amidotransferase subunit C.